We begin with the raw amino-acid sequence, 1036 residues long: DNA-directed RNA polymerase subunit beta (1036 aa).

It belongs to the RNA polymerase beta chain family. In plastids the minimal PEP RNA polymerase catalytic core is composed of four subunits: alpha, beta, beta', and beta''. When a (nuclear-encoded) sigma factor is associated with the core the holoenzyme is formed, which can initiate transcription.

It is found in the plastid. It localises to the chloroplast. It catalyses the reaction RNA(n) + a ribonucleoside 5'-triphosphate = RNA(n+1) + diphosphate. DNA-dependent RNA polymerase catalyzes the transcription of DNA into RNA using the four ribonucleoside triphosphates as substrates. In Cyanidioschyzon merolae (strain NIES-3377 / 10D) (Unicellular red alga), this protein is DNA-directed RNA polymerase subunit beta.